Consider the following 486-residue polypeptide: MNFIKRAFWNMKAKKGKTLLQLFVFTVICVFVLSGLAIQSAAQKSSELARQELGGSVTLQVDRQKQMEKQQDSGEKRSFESTPIKVSDANKLAALDHVKSYNYTTSASANAGNFDAIESSSSSDSSSSSSSSNAKNSQGGGQGGPQMVQADLSIEGVISTALVDDFSDGDSKITDGRAITKSDVGKKVTVINETLAEENDLSVGDSITIESATDEDTTVKLKIVGIYKTTSSGDDQAQNFSFLNPYNKLYTPYTATAALKGDDYKNTIDSAVYYMDDAKNMDTFVKAAKKTSIDFDTYTLNTNDQLYQQMVGPIENVASFSKNVVYLVSVAGAVILGLIVMMSIRERKYEMGVLMAIGEKRWKLIGQFLTEILIVAVIAIGLASVTGNLVANQLGNQLLSQQISSSTDSTQTASGQMPGGGGGMGGKMFGHSSSNVDVIDSLNVAVSMNDMLILGGIGILIAIIATLLPSISVLRLHPKTILTKQE.

A helical transmembrane segment spans residues 18-38; that stretch reads TLLQLFVFTVICVFVLSGLAI. Basic and acidic residues predominate over residues 62-79; it reads DRQKQMEKQQDSGEKRSF. 2 disordered regions span residues 62-82 and 117-147; these read DRQK…FEST and IESS…GPQM. Residues 119-132 show a composition bias toward low complexity; that stretch reads SSSSSDSSSSSSSS. Helical transmembrane passes span 324–344, 365–385, and 451–471; these read VVYL…MMSI, IGQF…LASV, and MLIL…LPSI.

It belongs to the ABC-4 integral membrane protein family.

Its subcellular location is the cell membrane. This is an uncharacterized protein from Bacillus subtilis (strain 168).